Reading from the N-terminus, the 286-residue chain is Acetyl-coenzyme A carboxylase carboxyl transferase subunit beta (286 aa).

In terms of domain architecture, CoA carboxyltransferase N-terminal spans 23-286; that stretch reads IWVKCNNCNQ…ITNKPEPKKE (264 aa). Residues Cys27, Cys30, Cys46, and Cys49 each coordinate Zn(2+). Residues 27–49 form a C4-type zinc finger; sequence CNNCNQMIYKIELEKNLEVCPKC.

It belongs to the AccD/PCCB family. Acetyl-CoA carboxylase is a heterohexamer composed of biotin carboxyl carrier protein (AccB), biotin carboxylase (AccC) and two subunits each of ACCase subunit alpha (AccA) and ACCase subunit beta (AccD). Requires Zn(2+) as cofactor.

Its subcellular location is the cytoplasm. It carries out the reaction N(6)-carboxybiotinyl-L-lysyl-[protein] + acetyl-CoA = N(6)-biotinyl-L-lysyl-[protein] + malonyl-CoA. The protein operates within lipid metabolism; malonyl-CoA biosynthesis; malonyl-CoA from acetyl-CoA: step 1/1. Its function is as follows. Component of the acetyl coenzyme A carboxylase (ACC) complex. Biotin carboxylase (BC) catalyzes the carboxylation of biotin on its carrier protein (BCCP) and then the CO(2) group is transferred by the transcarboxylase to acetyl-CoA to form malonyl-CoA. This Wigglesworthia glossinidia brevipalpis protein is Acetyl-coenzyme A carboxylase carboxyl transferase subunit beta.